A 249-amino-acid polypeptide reads, in one-letter code: DNA polymerase sliding clamp (249 aa).

Belongs to the PCNA family. As to quaternary structure, the subunits circularize to form a toroid; DNA passes through its center. Replication factor C (RFC) is required to load the toroid on the DNA. Homotrimer. Interacts with NucS.

In terms of biological role, sliding clamp subunit that acts as a moving platform for DNA processing. Responsible for tethering the catalytic subunit of DNA polymerase and other proteins to DNA during high-speed replication. Regulates activity of NucS endonuclease and prevents non-specific cleavage. This is DNA polymerase sliding clamp from Pyrococcus abyssi (strain GE5 / Orsay).